The chain runs to 390 residues: Protein phosphatase 1B (390 aa).

Over residues 1 to 14 (MGAFLDKPKTEKHN) the composition is skewed to basic and acidic residues. Positions 1–20 (MGAFLDKPKTEKHNAHGAGN) are disordered. Gly-2 carries the N-myristoyl glycine lipid modification. Lys-12 participates in a covalent cross-link: Glycyl lysine isopeptide (Lys-Gly) (interchain with G-Cter in ISG15). The PPM-type phosphatase domain maps to 23–295 (RYGLSSMQGW…DNMSIVLVCF (273 aa)). Residues Asp-60, Gly-61, Asp-243, and Asp-286 each contribute to the Mn(2+) site. Residues 371–390 (NPNKDNDGGAGDLEDSLVAL) are disordered. Phosphoserine is present on Ser-386.

Belongs to the PP2C family. As to quaternary structure, monomer. Interacts with PAK6. Interacts with the phosphorylated form of IKBKB/IKKB. Requires Mg(2+) as cofactor. The cofactor is Mn(2+). Post-translationally, isgylation negatively regulates its activity. In terms of processing, N-myristoylation is essential for the recognition of its substrates for dephosphorylation.

The protein resides in the cytoplasm. It is found in the cytosol. Its subcellular location is the membrane. It catalyses the reaction O-phospho-L-seryl-[protein] + H2O = L-seryl-[protein] + phosphate. It carries out the reaction O-phospho-L-threonyl-[protein] + H2O = L-threonyl-[protein] + phosphate. Enzyme with a broad specificity. Dephosphorylates PRKAA1 and PRKAA2. Inhibits TBK1-mediated antiviral signaling by dephosphorylating it at 'Ser-172'. Plays an important role in the termination of TNF-alpha-mediated NF-kappa-B activation through dephosphorylating and inactivating IKBKB/IKKB. The sequence is that of Protein phosphatase 1B (Ppm1b) from Rattus norvegicus (Rat).